Reading from the N-terminus, the 894-residue chain is Microsomal triglyceride transfer protein large subunit (894 aa).

A signal peptide spans 1–18; it reads MILLAVLFLCFISSYSAS. A Vitellogenin domain is found at 28–662; that stretch reads LNNDRLYKLK…YVGKTPLHAI (635 aa). Cys174 and Cys194 are joined by a disulfide.

In terms of assembly, heterodimer; heterodimerizes with the protein disulfide isomerase (P4HB/PDI). Interacts with APOB. Interacts with PRAP1.

It localises to the endoplasmic reticulum. The protein localises to the golgi apparatus. The catalysed reaction is a 1,2-diacyl-sn-glycero-3-phosphocholine(in) = a 1,2-diacyl-sn-glycero-3-phosphocholine(out). It catalyses the reaction a 1,2-diacyl-sn-glycero-3-phosphoethanolamine(in) = a 1,2-diacyl-sn-glycero-3-phosphoethanolamine(out). The enzyme catalyses a cholesterol ester(in) = a cholesterol ester(out). It carries out the reaction a triacyl-sn-glycerol(in) = a triacyl-sn-glycerol(out). Catalyzes the transport of triglyceride, cholesteryl ester, and phospholipid between phospholipid surfaces. Required for the assembly and secretion of plasma lipoproteins that contain apolipoprotein B. May be involved in regulating cholesteryl ester biosynthesis in cells that produce lipoproteins. This chain is Microsomal triglyceride transfer protein large subunit (MTTP), found in Sus scrofa (Pig).